The chain runs to 60 residues: Large ribosomal subunit protein bL32 (60 aa).

The tract at residues 1-44 (MAVQQNKKSRSARDMRRSHDALSENALSVEKTTGEVHLRHHVSP) is disordered. The segment covering 11–22 (SARDMRRSHDAL) has biased composition (basic and acidic residues).

This sequence belongs to the bacterial ribosomal protein bL32 family.

The chain is Large ribosomal subunit protein bL32 from Pseudomonas putida (strain W619).